A 320-amino-acid polypeptide reads, in one-letter code: Aspartate carbamoyltransferase catalytic subunit (320 aa).

The carbamoyl phosphate site is built by Arg-68 and Thr-69. Lys-96 lines the L-aspartate pocket. Carbamoyl phosphate-binding residues include Arg-118, His-148, and Gln-151. Residues Arg-181 and Arg-236 each coordinate L-aspartate. Carbamoyl phosphate is bound by residues Gly-277 and Pro-278.

The protein belongs to the aspartate/ornithine carbamoyltransferase superfamily. ATCase family. In terms of assembly, heterododecamer (2C3:3R2) of six catalytic PyrB chains organized as two trimers (C3), and six regulatory PyrI chains organized as three dimers (R2).

It carries out the reaction carbamoyl phosphate + L-aspartate = N-carbamoyl-L-aspartate + phosphate + H(+). It functions in the pathway pyrimidine metabolism; UMP biosynthesis via de novo pathway; (S)-dihydroorotate from bicarbonate: step 2/3. Functionally, catalyzes the condensation of carbamoyl phosphate and aspartate to form carbamoyl aspartate and inorganic phosphate, the committed step in the de novo pyrimidine nucleotide biosynthesis pathway. The polypeptide is Aspartate carbamoyltransferase catalytic subunit (Polaromonas naphthalenivorans (strain CJ2)).